A 913-amino-acid polypeptide reads, in one-letter code: Transient receptor potential cation channel protein painless (913 aa).

At 1 to 490 (MDFNNCGFID…SSFLFLKWHR (490 aa)) the chain is on the cytoplasmic side. ANK repeat units follow at residues 154–189 (GEFTPLHHVLRKSKVKAGKKELIQLFLDHPELDIDS), 260–289 (EYFGLLQESIKRGRQRAFDVILSTGMDINS), and 368–397 (GRLVPLFFAVKYRNTSAMQKLLKNGAYIGS). A helical transmembrane segment spans residues 491 to 511 (LSVIFYLNFLIYSLFTASIIT). The Extracellular segment spans residues 512–523 (YTLLKFHESDQR). Residues 524-544 (ALTAFFGLLSWLGISYLILRE) traverse the membrane as a helical segment. The Cytoplasmic segment spans residues 545-555 (CIQWIMSPVRY). The helical transmembrane segment at 556–576 (FWSITNIMEVALITLSIFTCM) threads the bilayer. The Extracellular segment spans residues 577–586 (ESSFDKETQR). The helical transmembrane segment at 587–607 (VLAVFTILLVSMEFCLLVGSL) threads the bilayer. Topologically, residues 608–628 (PVLSISTHMLMLREVSNSFLK) are cytoplasmic. The chain crosses the membrane as a helical span at residues 629–649 (SFTLYSIFVLTFSLCFYILFG). The Extracellular portion of the chain corresponds to 650–708 (KSVEEDQSKSATPCPPLGKKEGKDEEQGFNTFTKPIEAVIKTIVMLTGEFDAGSIQFTS). Residues 656–675 (QSKSATPCPPLGKKEGKDEE) are disordered. The chain crosses the membrane as a helical span at residues 709-729 (IYTYLIFLLFVIFMTIVLFNL). Residues 730–913 (LNGLAVSDTQ…QLIQLVQDRK (184 aa)) lie on the Cytoplasmic side of the membrane.

This sequence belongs to the transient receptor (TC 1.A.4) family. Present in multidendritic neurons, chordotonal neurons, a subset of cells in the central nervous system and a subset of sensory neurons in the antennal-maxillary complex. Not detected in gonads and dorsal vessels (at protein level). Expressed in peripheral neurons that extend multiple branched dendrites beneath the larval epidermis, similar to vertebrate pain receptors.

It localises to the membrane. In terms of biological role, receptor-activated non-selective cation channel involved in detection of pain sensation due to high temperature. Involved in heat nociception by being activated by noxious temperature of 38 degrees Celsius. This Drosophila melanogaster (Fruit fly) protein is Transient receptor potential cation channel protein painless (pain).